The following is a 384-amino-acid chain: Galactokinase (384 aa).

Glu-34–Asp-37 lines the substrate pocket. Ser-123–Ser-129 serves as a coordination point for ATP. Residues Ser-129 and Glu-161 each coordinate Mg(2+). Asp-173 functions as the Proton acceptor in the catalytic mechanism. Tyr-222 is a binding site for substrate.

Belongs to the GHMP kinase family. GalK subfamily.

It localises to the cytoplasm. The catalysed reaction is alpha-D-galactose + ATP = alpha-D-galactose 1-phosphate + ADP + H(+). Its pathway is carbohydrate metabolism; galactose metabolism. Its function is as follows. Catalyzes the transfer of the gamma-phosphate of ATP to D-galactose to form alpha-D-galactose-1-phosphate (Gal-1-P). In Actinobacillus pleuropneumoniae (Haemophilus pleuropneumoniae), this protein is Galactokinase.